A 529-amino-acid polypeptide reads, in one-letter code: Scarecrow-like protein 13 (529 aa).

Residues 51-81 (ASGSLPSYDSPSVSITSGRSPFSPQGSQSCI) are compositionally biased toward polar residues. Residues 51-84 (ASGSLPSYDSPSVSITSGRSPFSPQGSQSCISDL) form a disordered region. The 380-residue stretch at 146–525 (LLALTPQLDL…RPMATCSVWK (380 aa)) folds into the GRAS domain. The tract at residues 153-213 (LDLKEVLVEA…RARLEGSGSN (61 aa)) is leucine repeat I (LRI). The VHIID stretch occupies residues 232-297 (MSVLYEICPY…GGPPLLRVTG (66 aa)). Residues 263 to 267 (VHIID) carry the VHIID motif. The segment at 313-345 (LVGERLATLAQSCGVPFEFHDAIMSGCKVQREH) is leucine repeat II (LRII). The interval 354 to 448 (VVVNFPYVLH…QHCVARDIVN (95 aa)) is PFYRE. An SAW region spans residues 451–525 (ACEESERVER…RPMATCSVWK (75 aa)).

Belongs to the GRAS family. Expressed in roots, hypocotyls, cotyledons, shoot apex, leaves, flowers and siliques.

It localises to the cytoplasm. The protein localises to the nucleus. Its function is as follows. Probable transcription factor that acts as a positive regulator of continuous red light signals downstream of phytochrome B (phyB). Required for the regulation of hypocotyl elongation during de-etiolation. May be required to modulate phytochrome A (phyA) signal transduction in a phyB-independent way. In Arabidopsis thaliana (Mouse-ear cress), this protein is Scarecrow-like protein 13 (SCL13).